We begin with the raw amino-acid sequence, 152 residues long: Mediator of RNA polymerase II transcription subunit 9 (152 aa).

A coiled-coil region spans residues 98–150 (IKRCKALLQENEEVRNLLANSIEEWENIIADKEQQLRVKAKVLRDLDARIEKI).

It belongs to the Mediator complex subunit 9 family. As to quaternary structure, component of the Mediator complex.

The protein resides in the nucleus. Its function is as follows. Component of the Mediator complex, a coactivator involved in the regulated transcription of nearly all RNA polymerase II-dependent genes. Mediator functions as a bridge to convey information from gene-specific regulatory proteins to the basal RNA polymerase II transcription machinery. Mediator is recruited to promoters by direct interactions with regulatory proteins and serves as a scaffold for the assembly of a functional preinitiation complex with RNA polymerase II and the general transcription factors. The sequence is that of Mediator of RNA polymerase II transcription subunit 9 (CSE2) from Candida glabrata (strain ATCC 2001 / BCRC 20586 / JCM 3761 / NBRC 0622 / NRRL Y-65 / CBS 138) (Yeast).